The chain runs to 524 residues: MSAFKPYTEALEVLKKYEKKDGLSIDDLIRHNFQGGLTFNDFLILPGYIDFVPNNVSLETRISRNIVLKTPFMSSPMDTVTEDQMAIYMALLGGIGVIHHNCTPEEQAAMVRKVKKYENGFILDPVVFSPQHTVGDVLKIKETKGFSGIPITENGKLRGKLVGIVTSRDVQFHKDTNTPVTEVMTPREELITTAEGISLERANEMLRKSKKGKLPVVDKDDNLVALLSLTDLMKNLHFPLASKTSDTKQLMVAAAIGTRDDDRTRLALLAEAGLDAVVIDSSQGNSCFQIEMIKWIKKTYPKIDVIAGNVVTREQTASLIAAGADGLRVGMGSGSACITQEVMACGRPQATAIAQVAEFASQFGIGVIADGGIQNVGHMVKSLSLGATAVMMGGLLAGTTESPGEYYVREGQRYKSYRGMGSIAAMEGTGVNKNASTGRYFSENDAVRVAQGVSGLVVDKGSLLRFLPYLYTGLQHALQDIGTKSLDELHEAVDKHEVRFELRSSAAIREGDIQGFATYEKRLY.

CBS domains follow at residues 121–180 and 184–242; these read FILD…NTPV and MTPR…PLAS. Residues 280 to 282 and 330 to 332 each bind NAD(+); these read DSS and GMG. K(+) is bound by residues glycine 332 and glycine 334. Position 335 (serine 335) interacts with IMP. K(+) is bound at residue cysteine 337. The active-site Thioimidate intermediate is the cysteine 337. IMP-binding positions include 370-372, 393-394, and 417-421; these read DGG, GG, and YRGMG. The active-site Proton acceptor is the arginine 439. Position 451 (glutamine 451) interacts with IMP. Positions 510 and 511 each coordinate K(+).

It belongs to the IMPDH/GMPR family. As to quaternary structure, homotetramer. The cofactor is K(+).

The protein localises to the cytoplasm. It catalyses the reaction IMP + NAD(+) + H2O = XMP + NADH + H(+). It participates in purine metabolism; XMP biosynthesis via de novo pathway; XMP from IMP: step 1/1. Mycophenolic acid (MPA) is a non-competitive inhibitor that prevents formation of the closed enzyme conformation by binding to the same site as the amobile flap. In contrast, mizoribine monophosphate (MZP) is a competitive inhibitor that induces the closed conformation. MPA is a potent inhibitor of mammalian IMPDHs but a poor inhibitor of the bacterial enzymes. MZP is a more potent inhibitor of bacterial IMPDH. Functionally, catalyzes the conversion of inosine 5'-phosphate (IMP) to xanthosine 5'-phosphate (XMP), the first committed and rate-limiting step in the de novo synthesis of guanine nucleotides, and therefore plays an important role in the regulation of cell growth. The chain is Inosine-5'-monophosphate dehydrogenase (gua1) from Schizosaccharomyces pombe (strain 972 / ATCC 24843) (Fission yeast).